We begin with the raw amino-acid sequence, 407 residues long: Probable tRNA sulfurtransferase (407 aa).

A THUMP domain is found at 61–165 (NEITYRLSKI…LDAIYMYEEV (105 aa)). ATP-binding positions include 183 to 184 (ML), 208 to 209 (HF), R265, G287, and Q296.

Belongs to the ThiI family.

It localises to the cytoplasm. It catalyses the reaction [ThiI sulfur-carrier protein]-S-sulfanyl-L-cysteine + a uridine in tRNA + 2 reduced [2Fe-2S]-[ferredoxin] + ATP + H(+) = [ThiI sulfur-carrier protein]-L-cysteine + a 4-thiouridine in tRNA + 2 oxidized [2Fe-2S]-[ferredoxin] + AMP + diphosphate. The enzyme catalyses [ThiS sulfur-carrier protein]-C-terminal Gly-Gly-AMP + S-sulfanyl-L-cysteinyl-[cysteine desulfurase] + AH2 = [ThiS sulfur-carrier protein]-C-terminal-Gly-aminoethanethioate + L-cysteinyl-[cysteine desulfurase] + A + AMP + 2 H(+). It participates in cofactor biosynthesis; thiamine diphosphate biosynthesis. In terms of biological role, catalyzes the ATP-dependent transfer of a sulfur to tRNA to produce 4-thiouridine in position 8 of tRNAs, which functions as a near-UV photosensor. Also catalyzes the transfer of sulfur to the sulfur carrier protein ThiS, forming ThiS-thiocarboxylate. This is a step in the synthesis of thiazole, in the thiamine biosynthesis pathway. The sulfur is donated as persulfide by IscS. The protein is Probable tRNA sulfurtransferase of Staphylococcus aureus (strain N315).